The primary structure comprises 449 residues: SVGFKAGVKDYKLTYYTPDYETKDTDILAAFRVTPQPGVPPEEAGAAVAAESSTGTWTTVWTDGLTSLDRYKGRCYHIEAVVGEDNQYIAYVAYPLDLFEEGSVTNMLTSIVGNVFGFKALRALRLEDLRIPPAYSKTFQGPPHGIQVERDKLNKYGRPLLGCTIKPKLGLSAKNYGRAVYECLRGGLDFTKDDENVNSQPFMRWRDRFVFCAEALYKAQAETGEIKGHYLNATAGTCEEMMKRAVFARELGAPIVMHDYLTGGFTANTSLAHYCRDNGLLLHIHRAMHAVIDRQKNHGMHFRVLAKALRMSGGDHIHGGTVVGKLEGEREITLGFVDLLRDDYIEKDRSRGIFFTQDWVSMPGVIPVASGGIHVWHMPALTEIFGDDSVLQFGGGTLGHPWGNAPGAVANRVALEACVQARNEGRDLAREGNEIIREASKWSPELAAA.

Lys5 bears the N6,N6,N6-trimethyllysine mark. The substrate site is built by Asn114 and Thr164. The active-site Proton acceptor is the Lys166. Position 168 (Lys168) interacts with substrate. Mg(2+) is bound by residues Lys192, Asp194, and Glu195. The residue at position 192 (Lys192) is an N6-carboxylysine. Residue His285 is the Proton acceptor of the active site. Substrate contacts are provided by Arg286, His318, and Ser370.

The protein belongs to the RuBisCO large chain family. Type I subfamily. Heterohexadecamer of 8 large chains and 8 small chains; disulfide-linked. The disulfide link is formed within the large subunit homodimers. Mg(2+) serves as cofactor. The disulfide bond which can form in the large chain dimeric partners within the hexadecamer appears to be associated with oxidative stress and protein turnover.

Its subcellular location is the plastid. The protein localises to the chloroplast. The catalysed reaction is 2 (2R)-3-phosphoglycerate + 2 H(+) = D-ribulose 1,5-bisphosphate + CO2 + H2O. It carries out the reaction D-ribulose 1,5-bisphosphate + O2 = 2-phosphoglycolate + (2R)-3-phosphoglycerate + 2 H(+). RuBisCO catalyzes two reactions: the carboxylation of D-ribulose 1,5-bisphosphate, the primary event in carbon dioxide fixation, as well as the oxidative fragmentation of the pentose substrate in the photorespiration process. Both reactions occur simultaneously and in competition at the same active site. The sequence is that of Ribulose bisphosphate carboxylase large chain from Zamioculcas zamiifolia (Aroid palm).